The chain runs to 2148 residues: MEHVTIKQSGTRADPFRVFIFGDQSSCNLSNLQLLLLKKSNIYLASFVDQVNFTLRHEIARLTTAERQSFPAFSSIQNLVTRALKKDKSVALESTLATIYHLCCFLNYFGDGQEAYPTGPNTHISGLCIGALAAAAVSSSKSLAELVQAGIDAVRVSLKVGLLVARTAALFSHQEPNGTSSSPWSYAVPDSQLPLAFAEEAIESYQVKTKIPPLSLPYISAKGQNSWTVSGPPEIVQHFLESSKFEKTLRLTPLAVHAPYHAPHIFSARDVEHIIHAVGPVSNISSKLSFISSSSSCNLPNGVKFQDLLYRAVEDILILSLDLREAAENIRLVLEATDDVQQCVLFPISTTVCPSLKQSFSPVLASRVSIVDCIMESVAANAGPKSTSGPKPSDSKIAIIGMSGRFPESADVEAFWDLLYQGLDVHRPVPPDRFNGESYYDVTGKRKNTCKVMHGCWINEPGLFDAKFFNISPKEAEQSDPGQRLALATAYEALESAGVVADRTPSTQRDRVGVFYGMTSDDYREVSCGQNVDTYFIPGGNRAFTPGKINYFFKYCGPSVSVDTACSSSLAAIHLACNSIWLNECDTAIAGGTNVMTNPDSFVGLDRGYFLSRTGNCHTFDDEADGYCRADAVGTVILKRLEDAIADHDPILGIISGAYTNHSADSVSITRPHSGAQEEIFSKLLTESGVHPHQVSYIEMHGTGTQAGDATEMTSVLNCFAPSTHPRRLPHESLHLGSTKANVGHAESASGVSALIKVLLMMEKNIIPPHCGIKGKINQKFPTDLDERNVHIAKTATQWNRRDEFNNIRRAFVNNFSAAGGNTALLVEDYPLPTVDSSQEDSRTAHVVAVSAKCVKSLKGNLENLKKFVQKQSSIEGFLPKLSYTTTARRMHHPFRVAIPAASSDQLLSALDQELKHESYRCTSESPVAFVFSGQGSQYSAIGRHLLHFTIFRDEVNSYDILAQRHGFPSIMPLIDGSVDIEDLEPLVVQLGTVCVQMALASLWIAFGMRPAYVVGHSLGHYAALKVAGVLTASDTIYLVAMRARLLQNKCSRGSHTMLAIRSSADEMQAYLDEDIYDIACINGPQDTVVSGCIDDIDRLSQKLMDNRIKVTRVNVPFAFHSAQVDPILDELEAIASQVEFHTPRVAIGCPLLGKTFVAGETSSLGADHIKRHCRETVNFRDILRSAKGDGLISEKTAWIEIGPHTVCSTLLRANINQDIVAVPSLMRNKDGWQVLASSVATLYRHGLPVDWDEYHHDFEACKQVLRLPAYSWDNKVYWIHYVYDWLLTRGDPPVQAAASLPAPPSSFSTASVHRIVHESVDKGKLTLTAECEFTSEQLREVVYGHVVNGNRVCSSSLYTDFGVTLGLYILETYRPDLKDHSVDVQDMVVNKALVHKEGSTMLLRINVILDMTDGKAASMSIYSVNSKGDKTADHAQSSLHFEQPKVWLRNWDSTQYYVERSIEWLKEKADQGLNSRMSSGVIYKLFSSLVDYSTAYKGMQEAIVNTEDFEATALVRFQVDEGNFRCNPMWVDSCGQLAGFLMNGHAKTPKDQVFINHGWQSFRTVRKLSKDKTYRTYVRMRCIEGTTYAGDVYIFDNEGIVGVCGGITFQGIPRKVLNTAMPPPKSQNEAQVHSSPAKSRPKPPGSASSVHSGRLARHTNIEPLKLDAALKSATAARDPMQALFKIVSEEIGIPSASVQNDLVFADYGVDSLLSLSISGRLREELDLDVESSVFETCATLADLATHLGFDTFSSDQSSGQSSSCGGLSPRSDSTGEITSNATTPPSLSPRGSVSGSQCKDVCAILAEEIGVSMSEITNDTDLGELGMDSLMSLAVLSRLREELELDLEGDFFVSHPKFSSFKHMFQQGHEDEIEPEPSAELKQYRATSTLLQGNPKSALYTLFLLPDGSGSSFSYAPINAVRKDVCVYGLNCPWLKSAEKLVQFGLKGLATLYVEEIRRRAPHGPYNLGGWSAGGICAYEAAIQFTREGETVERLILLDSPNPIGLEKLPARLFDFVNGLGLFGDGKAPDWLLAHFLAFIDALDEWKPVPWDKALGSNTPPPMTYILWAEDGICKGTDARPEYRDDDPREMKWLLENRTNFGGNNWDVLLGEPALSIERIQDANHFTMLRKGKNTERVAAFIRSTFG.

Residues 19-261 (FIFGDQSSCN…TPLAVHAPYH (243 aa)) form an N-terminal acylcarrier protein transacylase domain (SAT) region. A Ketosynthase family 3 (KS3) domain is found at 394–829 (DSKIAIIGMS…GGNTALLVED (436 aa)). Active-site for beta-ketoacyl synthase activity residues include C566, H701, and H745. Residues 929-1233 (AFVFSGQGSQ…PSLMRNKDGW (305 aa)) are malonyl-CoA:ACP transacylase (MAT) domain. The active-site For acyl/malonyl transferase activity is the S1018. A product template (PT) domain region spans residues 1310 to 1624 (TASVHRIVHE…RKVLNTAMPP (315 aa)). The segment at 1314-1447 (HRIVHESVDK…SSLHFEQPKV (134 aa)) is N-terminal hotdog fold. Residues 1314–1619 (HRIVHESVDK…FQGIPRKVLN (306 aa)) form the PKS/mFAS DH domain. Residue H1346 is the Proton acceptor; for dehydratase activity of the active site. The tract at residues 1474 to 1619 (LNSRMSSGVI…FQGIPRKVLN (146 aa)) is C-terminal hotdog fold. D1533 serves as the catalytic Proton donor; for dehydratase activity. The segment at 1619-1655 (NTAMPPPKSQNEAQVHSSPAKSRPKPPGSASSVHSGR) is disordered. A compositionally biased stretch (polar residues) spans 1627–1638 (SQNEAQVHSSPA). One can recognise a Carrier 1 domain in the interval 1678-1752 (RDPMQALFKI…DLATHLGFDT (75 aa)). Residue S1712 is modified to O-(pantetheine 4'-phosphoryl)serine. The span at 1756 to 1769 (DQSSGQSSSCGGLS) shows a compositional bias: low complexity. Residues 1756–1796 (DQSSGQSSSCGGLSPRSDSTGEITSNATTPPSLSPRGSVSG) are disordered. Over residues 1771-1796 (RSDSTGEITSNATTPPSLSPRGSVSG) the composition is skewed to polar residues. A Carrier 2 domain is found at 1793–1870 (SVSGSQCKDV…SFKHMFQQGH (78 aa)). S1830 is subject to O-(pantetheine 4'-phosphoryl)serine. A thioesterase (TE) domain region spans residues 1882 to 2146 (LKQYRATSTL…ERVAAFIRST (265 aa)). S1973 serves as the catalytic For thioesterase activity.

Functionally, polyketide synthase; part of the Pks1 gene cluster that mediates the biosynthesis of an anthraquinone derivative pigment that contributes to conidial pigmentation that provides protection from UV radiation, heat and cold stress. The polyketide synthase Pks1 produces 1-acetyl-2,4,6,8-tetrahydroxy-9,10-anthraquinone though condensation of acetyl-CoA with malonyl-CoA. The dehydratase EthD and the laccase Mlac1 further convert the anthraquinone derivative into the final conidial pigment. The protein is Polyketide synthase 1 of Metarhizium acridum (strain CQMa 102).